Reading from the N-terminus, the 109-residue chain is Movement protein (109 aa).

Residues Met1–Gly28 are disordered. A helical membrane pass occupies residues Val34–Trp54.

Belongs to the mastrevirus movement protein family. As to quaternary structure, interacts with the capsid protein (CP). Part of a MP-CP-viral DNA complex.

The protein localises to the host membrane. Involved in the viral transport within, and between cells. This Sugarcane streak virus (isolate South Africa) (SSV) protein is Movement protein.